The sequence spans 404 residues: Glycosylated lysosomal membrane protein (404 aa).

The N-terminal stretch at methionine 1–glycine 35 is a signal peptide. At glutamate 36–glycine 370 the chain is on the lumenal side. N-linked (GlcNAc...) asparagine glycosylation is found at asparagine 64, asparagine 85, asparagine 94, asparagine 133, asparagine 157, asparagine 166, asparagine 185, asparagine 228, and asparagine 331. The helical transmembrane segment at isoleucine 371–leucine 391 threads the bilayer. At leucine 392–asparagine 404 the chain is on the cytoplasmic side. Residues tyrosine 400–asparagine 404 carry the Lysosomal targeting motif motif.

It belongs to the GLMP family. As to quaternary structure, interacts (via lumenal domain) with lysosomal protein MFSD1; the interaction starts while both proteins are still in the endoplasmic reticulum and is required for stabilization of MFSD1 in lysosomes but has no direct effect on its targeting to lysosomes or transporter activity. Post-translationally, highly N-glycosylated. N-glycosylation is essential for GLMP stability and for MFSD1 lysosomal localization. Detected in brain, heart, liver, kidney, lung, intestine, testis and spleen. Expressed at highest levels in kidney cortex. However, another study reports highest expression levels in lung. Expressed in myoblasts with expression increasing during differentiation into myotubes.

The protein resides in the lysosome membrane. Functionally, required to protect lysosomal transporter MFSD1 from lysosomal proteolysis and for MFSD1 lysosomal localization. This chain is Glycosylated lysosomal membrane protein, found in Mus musculus (Mouse).